The chain runs to 621 residues: Probable potassium transport system protein Kup 2 (621 aa).

12 helical membrane passes run 9–29, 48–68, 101–121, 136–156, 164–184, 210–230, 246–266, 275–295, 336–356, 364–384, 393–413, and 418–438; these read MAGLTLAALGVVYGDIGTSPL, IFGILSLIFWSLIFVVSVKYV, IVLLGLFGAALFYGDAIITPA, SGMEAYVLPMAVGVLVGLFLL, VGLMFGPVMMVWFAILGILGL, GFHAFLTLGSVVLALTGAEAL, WFSLVLPGLGLNYFGQGALLM, PFFLLAPDWALLPMIALATLA, IYMPFINWALLVAVLVVVLTF, AAYGIAVTGTMLITTMLFFVV, LPLALGITLLFGVIDTAFFAA, and VADGGWLPLVMGMAIFTLMST.

It belongs to the HAK/KUP transporter (TC 2.A.72) family.

The protein resides in the cell inner membrane. It carries out the reaction K(+)(in) + H(+)(in) = K(+)(out) + H(+)(out). Its function is as follows. Transport of potassium into the cell. Likely operates as a K(+):H(+) symporter. The polypeptide is Probable potassium transport system protein Kup 2 (Chromobacterium violaceum (strain ATCC 12472 / DSM 30191 / JCM 1249 / CCUG 213 / NBRC 12614 / NCIMB 9131 / NCTC 9757 / MK)).